We begin with the raw amino-acid sequence, 291 residues long: DegV domain-containing protein CPE0026 (291 aa).

Positions Phe4–Gly286 constitute a DegV domain. Hexadecanoate is bound by residues Thr63 and Ser95.

Its function is as follows. May bind long-chain fatty acids, such as palmitate, and may play a role in lipid transport or fatty acid metabolism. The sequence is that of DegV domain-containing protein CPE0026 from Clostridium perfringens (strain 13 / Type A).